The sequence spans 454 residues: Glutamine synthetase (454 aa).

The GS beta-grasp domain occupies 25-111 (QGIDFLRLQF…LICDVVDREG (87 aa)). Residues 118-454 (PRQVLKNVLA…WETDRYLEKF (337 aa)) enclose the GS catalytic domain. Residues glutamate 141 and glutamate 143 each coordinate Mg(2+). Glutamate 193 lines the ATP pocket. The Mg(2+) site is built by glutamate 198 and glutamate 205. Residues 249–250 (NG) and glycine 250 each bind L-glutamate. Histidine 254 contributes to the Mg(2+) binding site. Residues 256–258 (HIS) and serine 258 each bind ATP. L-glutamate contacts are provided by arginine 308, glutamate 314, and arginine 326. Residues arginine 326 and arginine 331 each coordinate ATP. Glutamate 343 provides a ligand contact to Mg(2+). Arginine 345 is a binding site for L-glutamate.

Belongs to the glutamine synthetase family. As to quaternary structure, oligomer of 12 subunits arranged in the form of two hexagons. In its feedback-inhibited form, interacts with TnrA in order to block its DNA-binding activity. Requires Mg(2+) as cofactor.

Its subcellular location is the cytoplasm. The enzyme catalyses L-glutamate + NH4(+) + ATP = L-glutamine + ADP + phosphate + H(+). With respect to regulation, inhibited by glutamine. Its function is as follows. Glutamine synthetase (GS) is an unusual multitasking protein that functions as an enzyme, a transcription coregulator, and a chaperone in ammonium assimilation and in the regulation of genes involved in nitrogen metabolism. It catalyzes the ATP-dependent biosynthesis of glutamine from glutamate and ammonia. Feedback-inhibited GlnA also interacts with and regulates the activity of the transcriptional regulator TnrA. During nitrogen limitation, TnrA is in its DNA-binding active state and turns on the transcription of genes required for nitrogen assimilation. Under conditions of nitrogen excess, feedback-inhibited GlnA forms a stable complex with TnrA, which inhibits its DNA-binding activity. In contrast, feedback-inhibited GlnA acts as a chaperone to stabilize the DNA-binding activity of GlnR, which represses the transcription of nitrogen assimilation genes. The sequence is that of Glutamine synthetase from Halobacterium salinarum (strain ATCC 700922 / JCM 11081 / NRC-1) (Halobacterium halobium).